The sequence spans 282 residues: Elongation factor Ts (282 aa).

Residues 80 to 83 (TDFV) form an involved in Mg(2+) ion dislocation from EF-Tu region.

The protein belongs to the EF-Ts family.

The protein resides in the cytoplasm. In terms of biological role, associates with the EF-Tu.GDP complex and induces the exchange of GDP to GTP. It remains bound to the aminoacyl-tRNA.EF-Tu.GTP complex up to the GTP hydrolysis stage on the ribosome. The protein is Elongation factor Ts of Chlamydia trachomatis serovar A (strain ATCC VR-571B / DSM 19440 / HAR-13).